The primary structure comprises 152 residues: Transcriptional regulator MraZ (152 aa).

2 consecutive SpoVT-AbrB domains span residues 5–52 (ASAI…PLEA) and 81–124 (AHEC…DEAA).

The protein belongs to the MraZ family. In terms of assembly, forms oligomers.

The protein resides in the cytoplasm. It localises to the nucleoid. The chain is Transcriptional regulator MraZ from Shewanella loihica (strain ATCC BAA-1088 / PV-4).